The following is a 258-amino-acid chain: Apolipoprotein E (258 aa).

Positions 1-19 are cleaved as a signal peptide; sequence MRVWTVLLGAVLLLAACQA. 3 consecutive repeat copies span residues 112-133, 134-155, and 156-173. The segment at 112–173 is 3 X 22 AA approximate tandem repeats; the sequence is VDMEEAKTRV…KLEAYSKEAT (62 aa).

It belongs to the apolipoprotein A1/A4/E family. As to quaternary structure, homotetramer.

It localises to the secreted. Its subcellular location is the extracellular space. The protein resides in the extracellular matrix. In terms of biological role, APOE is an apolipoprotein, a protein associating with lipid particles, that mainly functions in lipoprotein-mediated lipid transport between organs via the plasma and interstitial fluids. APOE is a core component of plasma lipoproteins and is involved in their production, conversion and clearance. Apolipoproteins are amphipathic molecules that interact both with lipids of the lipoprotein particle core and the aqueous environment of the plasma. In Alligator mississippiensis (American alligator), this protein is Apolipoprotein E (APOE).